A 199-amino-acid chain; its full sequence is Fe/S biogenesis protein NfuA (199 aa).

Positions 151 and 154 each coordinate [4Fe-4S] cluster.

It belongs to the NfuA family. In terms of assembly, homodimer. It depends on [4Fe-4S] cluster as a cofactor.

Functionally, involved in iron-sulfur cluster biogenesis. Binds a 4Fe-4S cluster, can transfer this cluster to apoproteins, and thereby intervenes in the maturation of Fe/S proteins. Could also act as a scaffold/chaperone for damaged Fe/S proteins. This chain is Fe/S biogenesis protein NfuA, found in Xylella fastidiosa (strain M12).